A 135-amino-acid chain; its full sequence is Small ribosomal subunit protein uS11 (135 aa).

Positions 1 to 11 (MPPKARAGAAV) are enriched in low complexity. A disordered region spans residues 1-22 (MPPKARAGAAVKKVRRKERKNV).

It belongs to the universal ribosomal protein uS11 family. Part of the 30S ribosomal subunit. Interacts with proteins S7 and S18. Binds to IF-3.

In terms of biological role, located on the platform of the 30S subunit, it bridges several disparate RNA helices of the 16S rRNA. Forms part of the Shine-Dalgarno cleft in the 70S ribosome. This is Small ribosomal subunit protein uS11 from Salinispora tropica (strain ATCC BAA-916 / DSM 44818 / JCM 13857 / NBRC 105044 / CNB-440).